We begin with the raw amino-acid sequence, 241 residues long: Phosphoribosylaminoimidazole-succinocarboxamide synthase (241 aa).

The protein belongs to the SAICAR synthetase family.

The enzyme catalyses 5-amino-1-(5-phospho-D-ribosyl)imidazole-4-carboxylate + L-aspartate + ATP = (2S)-2-[5-amino-1-(5-phospho-beta-D-ribosyl)imidazole-4-carboxamido]succinate + ADP + phosphate + 2 H(+). It functions in the pathway purine metabolism; IMP biosynthesis via de novo pathway; 5-amino-1-(5-phospho-D-ribosyl)imidazole-4-carboxamide from 5-amino-1-(5-phospho-D-ribosyl)imidazole-4-carboxylate: step 1/2. The sequence is that of Phosphoribosylaminoimidazole-succinocarboxamide synthase from Deinococcus geothermalis (strain DSM 11300 / CIP 105573 / AG-3a).